The primary structure comprises 122 residues: UPF0382 membrane protein SAUSA300_0565 (122 aa).

4 helical membrane passes run 3–23 (LFIILGALNAMMAVGTGAFGA), 46–66 (MYHGLALLIIGVISGTTSINV), 69–89 (AGWLIFAGIIFFSGSLYILVL), and 98–118 (ITPIGGVLFIIGWIMLIIATF).

This sequence belongs to the UPF0382 family.

Its subcellular location is the cell membrane. This Staphylococcus aureus (strain USA300) protein is UPF0382 membrane protein SAUSA300_0565.